A 146-amino-acid chain; its full sequence is Ferredoxin-type protein FwdE (146 aa).

4Fe-4S ferredoxin-type domains are found at residues 90 to 115 (IKLF…TLDN) and 116 to 145 (FTVG…FIKE). Residues Cys125, Cys128, Cys131, and Cys135 each coordinate [4Fe-4S] cluster.

Requires [4Fe-4S] cluster as cofactor.

This chain is Ferredoxin-type protein FwdE (fwdE), found in Methanocaldococcus jannaschii (strain ATCC 43067 / DSM 2661 / JAL-1 / JCM 10045 / NBRC 100440) (Methanococcus jannaschii).